Consider the following 442-residue polypeptide: Methylenetetrahydrofolate--tRNA-(uracil-5-)-methyltransferase TrmFO 1 (442 aa).

9-14 lines the FAD pocket; it reads GAGLAG.

This sequence belongs to the MnmG family. TrmFO subfamily. The cofactor is FAD.

Its subcellular location is the cytoplasm. The enzyme catalyses uridine(54) in tRNA + (6R)-5,10-methylene-5,6,7,8-tetrahydrofolate + NADH + H(+) = 5-methyluridine(54) in tRNA + (6S)-5,6,7,8-tetrahydrofolate + NAD(+). It catalyses the reaction uridine(54) in tRNA + (6R)-5,10-methylene-5,6,7,8-tetrahydrofolate + NADPH + H(+) = 5-methyluridine(54) in tRNA + (6S)-5,6,7,8-tetrahydrofolate + NADP(+). In terms of biological role, catalyzes the folate-dependent formation of 5-methyl-uridine at position 54 (M-5-U54) in all tRNAs. This chain is Methylenetetrahydrofolate--tRNA-(uracil-5-)-methyltransferase TrmFO 1, found in Mesoplasma florum (strain ATCC 33453 / NBRC 100688 / NCTC 11704 / L1) (Acholeplasma florum).